We begin with the raw amino-acid sequence, 164 residues long: Ribosome-binding factor A (164 aa).

Belongs to the RbfA family. In terms of assembly, monomer. Binds 30S ribosomal subunits, but not 50S ribosomal subunits or 70S ribosomes.

Its subcellular location is the cytoplasm. Functionally, one of several proteins that assist in the late maturation steps of the functional core of the 30S ribosomal subunit. Associates with free 30S ribosomal subunits (but not with 30S subunits that are part of 70S ribosomes or polysomes). Required for efficient processing of 16S rRNA. May interact with the 5'-terminal helix region of 16S rRNA. The polypeptide is Ribosome-binding factor A (Mycobacterium leprae (strain Br4923)).